A 467-amino-acid chain; its full sequence is tRNA(Ile)-lysidine synthase (467 aa).

Position 35 to 40 (35 to 40 (SGGPDS)) interacts with ATP.

The protein belongs to the tRNA(Ile)-lysidine synthase family.

The protein resides in the cytoplasm. It carries out the reaction cytidine(34) in tRNA(Ile2) + L-lysine + ATP = lysidine(34) in tRNA(Ile2) + AMP + diphosphate + H(+). Ligates lysine onto the cytidine present at position 34 of the AUA codon-specific tRNA(Ile) that contains the anticodon CAU, in an ATP-dependent manner. Cytidine is converted to lysidine, thus changing the amino acid specificity of the tRNA from methionine to isoleucine. The polypeptide is tRNA(Ile)-lysidine synthase (Caldanaerobacter subterraneus subsp. tengcongensis (strain DSM 15242 / JCM 11007 / NBRC 100824 / MB4) (Thermoanaerobacter tengcongensis)).